Consider the following 332-residue polypeptide: Glyceraldehyde-3-phosphate dehydrogenase 1 (332 aa).

4 residues coordinate NAD(+): Arg11, Ile12, Asp33, and Thr120. Residues 149–151 (SCT), Thr180, 209–210 (TG), and Arg232 each bind D-glyceraldehyde 3-phosphate. Cys150 (nucleophile) is an active-site residue. NAD(+) is bound by residues Asn314 and Tyr318.

It belongs to the glyceraldehyde-3-phosphate dehydrogenase family. In terms of assembly, homotetramer.

The protein localises to the cytoplasm. The enzyme catalyses D-glyceraldehyde 3-phosphate + phosphate + NAD(+) = (2R)-3-phospho-glyceroyl phosphate + NADH + H(+). It carries out the reaction NADH + H2O = (6R)-NADHX. The catalysed reaction is NADH + H2O = (6S)-NADHX. It catalyses the reaction NADPH + H2O = (6R)-NADPHX. The enzyme catalyses NADPH + H2O = (6S)-NADPHX. It functions in the pathway carbohydrate degradation; glycolysis; pyruvate from D-glyceraldehyde 3-phosphate: step 1/5. Its function is as follows. Glyceraldehyde-3-phosphate dehydrogenase (GAPDH) involved in glycolysis and gluconeogenesis. Catalyzes the reaction of glyceraldehyde-3-phosphate to 1,3 bis-phosphoglycerate. The contribution of the TDH1, TDH2, and TDH3 to the total glyceraldehyde-3-phosphate dehydrogenase activity is 10-15, 25-30, and 50-60%, respectively. May be involved in a process other than glycolysis because it is synthesized by cells in stationary phase. As a side activity, catalyzes the hydration of the nicotinamide ring of NADH or NADPH at the C6 position to give the corresponding hydrates, NADHX and NADPHX, which exist as R and S epimers, that cannot act as electron donors or acceptors and inhibit several dehydrogenases, making them toxic. In Saccharomyces cerevisiae (strain ATCC 204508 / S288c) (Baker's yeast), this protein is Glyceraldehyde-3-phosphate dehydrogenase 1.